We begin with the raw amino-acid sequence, 255 residues long: Homeobox protein DLX-1 (255 aa).

The span at 1-14 (MTMTTMPESLNSPV) shows a compositional bias: polar residues. 2 disordered regions span residues 1 to 38 (MTMTTMPESLNSPVSGKAVFMEFGPPNQQMSPSPMSHG) and 95 to 118 (SLAQSRLEDPGADSEKSTVVEGGE). Low complexity predominate over residues 25-36 (PPNQQMSPSPMS). Residues 100–112 (RLEDPGADSEKST) are compositionally biased toward basic and acidic residues. The segment at residues 128 to 187 (IRKPRTIYSSLQLQALNRRFQQTQYLALPERAELAASLGLTQTQVKIWFQNKRSKFKKLM) is a DNA-binding region (homeobox). The disordered stretch occupies residues 204 to 230 (ALSAGSPPVPPGWNPNSSSGKGSGGNA).

It belongs to the distal-less homeobox family. In terms of assembly, interacts with SMAD4 (via homeobox DNA-binding domain). Interacts (via homeobox DNA-binding domain) with POU4F2; this interaction suppresses DLX1-mediated transcriptional activity in postnatal retina and enhances retinal ganglion cell (RGC) differentiation. As to expression, expressed in hematopoietic cell lines.

Its subcellular location is the nucleus. In terms of biological role, plays a role as a transcriptional activator or repressor. Inhibits several cytokine signaling pathways, such as TGFB1, activin-A/INHBA and BMP4 by interfering with the transcriptional stimulatory activity of transcription factors, such as MSX2, FAST2, SMAD2 and SMAD3 during hematopoietic cell differentiation. Plays a role in terminal differentiation of interneurons, such as amacrine and bipolar cells in the developing retina. Likely to play a regulatory role in the development of the ventral forebrain. May play a role in craniofacial patterning and morphogenesis and may be involved in the early development of diencephalic subdivisions. This is Homeobox protein DLX-1 (DLX1) from Homo sapiens (Human).